A 784-amino-acid polypeptide reads, in one-letter code: Protein-tyrosine-phosphatase MKP1 (784 aa).

Disordered stretches follow at residues 1 to 73 (MVGR…NSKA) and 94 to 118 (PKAG…TGER). The span at 22–34 (WRSASWSASRTAS) shows a compositional bias: low complexity. Thr64 and Thr109 each carry phosphothreonine. The Tyrosine-protein phosphatase domain occupies 149–291 (ECSKVADHIY…LLQCQKRVHA (143 aa)). Cys235 serves as the catalytic Phosphocysteine intermediate. A substrate-binding site is contributed by 235 to 241 (CCQGVSR). The segment at 488 to 586 (HSSGSPSSTT…ASPSLAERRG (99 aa)) is disordered. Composition is skewed to low complexity over residues 489 to 510 (SSGS…FLSP) and 521 to 553 (SLKS…LSLL). A compositionally biased stretch (polar residues) spans 554-577 (PSQTSPKESRGVNTFLQPSPNRKA). Phosphoserine is present on residues Ser558 and Ser572.

In terms of assembly, interacts with MPK6. May interact with MPK3 and MPK4. Phosphorylated on threonine and serine residues by MPK6.

Its subcellular location is the cytoplasm. It localises to the cytosol. The catalysed reaction is O-phospho-L-tyrosyl-[protein] + H2O = L-tyrosyl-[protein] + phosphate. Protein-tyrosine-phosphatase that acts as a negative regulator of MPK6 and MPK3 signaling by dephosphorylating and repressing MPK6 and MPK3. Modulates defense response by repressing salicylic acid (SA) production, camalexin biosynthesis and SNC1-mediated responses. Acts as a negative regulator of MPK6-mediated pathogen-associated molecular pattern (PAMP) responses, including MPK6 and MPK3 activation, accumulation of extracellular reactive oxygen species and inhibition of seedling growth. Involved in UV-B stress tolerance. May be involved in salt and genotoxic stress responses. The protein is Protein-tyrosine-phosphatase MKP1 (MKP1) of Arabidopsis thaliana (Mouse-ear cress).